A 532-amino-acid chain; its full sequence is Bifunctional purine biosynthesis protein PurH (532 aa).

The MGS-like domain occupies 1 to 149; that stretch reads MTDPAPLTRA…KNHGAVTVLT (149 aa).

This sequence belongs to the PurH family.

The enzyme catalyses (6R)-10-formyltetrahydrofolate + 5-amino-1-(5-phospho-beta-D-ribosyl)imidazole-4-carboxamide = 5-formamido-1-(5-phospho-D-ribosyl)imidazole-4-carboxamide + (6S)-5,6,7,8-tetrahydrofolate. It catalyses the reaction IMP + H2O = 5-formamido-1-(5-phospho-D-ribosyl)imidazole-4-carboxamide. It participates in purine metabolism; IMP biosynthesis via de novo pathway; 5-formamido-1-(5-phospho-D-ribosyl)imidazole-4-carboxamide from 5-amino-1-(5-phospho-D-ribosyl)imidazole-4-carboxamide (10-formyl THF route): step 1/1. It functions in the pathway purine metabolism; IMP biosynthesis via de novo pathway; IMP from 5-formamido-1-(5-phospho-D-ribosyl)imidazole-4-carboxamide: step 1/1. This Jannaschia sp. (strain CCS1) protein is Bifunctional purine biosynthesis protein PurH.